A 142-amino-acid chain; its full sequence is Transcriptional regulator MraZ (142 aa).

SpoVT-AbrB domains lie at 5–51 (ASAL…PRPE) and 77–120 (AMDV…DSQT).

The protein belongs to the MraZ family. In terms of assembly, forms oligomers.

The protein localises to the cytoplasm. Its subcellular location is the nucleoid. The protein is Transcriptional regulator MraZ of Burkholderia multivorans (strain ATCC 17616 / 249).